The following is a 452-amino-acid chain: tRNA modification GTPase MnmE (452 aa).

Arg-21, Glu-78, and Lys-118 together coordinate (6S)-5-formyl-5,6,7,8-tetrahydrofolate. The region spanning 214-375 (GMKVVIAGRP…LREHLKQAMG (162 aa)) is the TrmE-type G domain. Asn-224 is a binding site for K(+). GTP-binding positions include 224 to 229 (NAGKSS), 243 to 249 (TDIAGTT), and 268 to 271 (DTAG). Position 228 (Ser-228) interacts with Mg(2+). K(+) contacts are provided by Thr-243, Ile-245, and Thr-248. Residue Thr-249 participates in Mg(2+) binding. A (6S)-5-formyl-5,6,7,8-tetrahydrofolate-binding site is contributed by Lys-452.

It belongs to the TRAFAC class TrmE-Era-EngA-EngB-Septin-like GTPase superfamily. TrmE GTPase family. As to quaternary structure, homodimer. Heterotetramer of two MnmE and two MnmG subunits. K(+) serves as cofactor.

Its subcellular location is the cytoplasm. In terms of biological role, exhibits a very high intrinsic GTPase hydrolysis rate. Involved in the addition of a carboxymethylaminomethyl (cmnm) group at the wobble position (U34) of certain tRNAs, forming tRNA-cmnm(5)s(2)U34. In Haemophilus influenzae (strain ATCC 51907 / DSM 11121 / KW20 / Rd), this protein is tRNA modification GTPase MnmE.